Reading from the N-terminus, the 460-residue chain is Diguanylate cyclase DosC (460 aa).

His98 provides a ligand contact to heme. The GGDEF domain maps to 325 to 458 (TPLSVLIIDV…GRNRVELWKA (134 aa)). Position 333 (Asp333) interacts with Mg(2+). Substrate-binding residues include Asn341 and Asp350. Asp376 contributes to the Mg(2+) binding site. Asp376 acts as the Proton acceptor in catalysis.

The cofactor is heme. Mg(2+) serves as cofactor.

It carries out the reaction 2 GTP = 3',3'-c-di-GMP + 2 diphosphate. Its pathway is purine metabolism; 3',5'-cyclic di-GMP biosynthesis. In terms of biological role, globin-coupled heme-based oxygen sensor protein displaying diguanylate cyclase (DGC) activity in response to oxygen availability. Thus, catalyzes the synthesis of cyclic diguanylate (c-di-GMP) via the condensation of 2 GTP molecules. Cyclic-di-GMP is a second messenger which controls cell surface-associated traits in bacteria. The polypeptide is Diguanylate cyclase DosC (dosC) (Shigella boydii serotype 4 (strain Sb227)).